The following is a 124-amino-acid chain: Small ribosomal subunit protein uS12 (124 aa).

D89 carries the 3-methylthioaspartic acid modification.

Belongs to the universal ribosomal protein uS12 family. In terms of assembly, part of the 30S ribosomal subunit. Contacts proteins S8 and S17. May interact with IF1 in the 30S initiation complex.

Functionally, with S4 and S5 plays an important role in translational accuracy. In terms of biological role, interacts with and stabilizes bases of the 16S rRNA that are involved in tRNA selection in the A site and with the mRNA backbone. Located at the interface of the 30S and 50S subunits, it traverses the body of the 30S subunit contacting proteins on the other side and probably holding the rRNA structure together. The combined cluster of proteins S8, S12 and S17 appears to hold together the shoulder and platform of the 30S subunit. This chain is Small ribosomal subunit protein uS12, found in Vibrio campbellii (strain ATCC BAA-1116).